A 518-amino-acid polypeptide reads, in one-letter code: Fusicoccin H C-9 hydroxylase (518 aa).

The helical transmembrane segment at 12-29 threads the bilayer; it reads HLLLISTVIAVLAALIVS. N-linked (GlcNAc...) asparagine glycosylation is found at N81 and N168. C456 provides a ligand contact to heme.

The protein belongs to the cytochrome P450 family. Heme is required as a cofactor.

The protein resides in the membrane. It participates in mycotoxin biosynthesis. Functionally, cytochrome P450 monooxygenase; part of the 2 gene clusters that mediate the biosynthesis of fusicoccins, diterpene glucosides that display phytohormone-like activity and function as potent activators of plasma membrane H(+)-ATPases in plants by modifying 14-3-3 proteins and cause the plant disease constriction canker. The first step in the pathway is performed by the fusicoccadiene synthase PaFS that possesses both prenyl transferase and terpene cyclase activity, converting isopentenyl diphosphate and dimethylallyl diphosphate into geranylgeranyl diphosphate (GGDP) and successively converting GGDP into fusicocca-2,10(14)-diene, a precursor for fusicoccin H. The second step is the oxidation at the C-8 position by the cytochrome P450 monooxygenase PaP450-2 to yield fusicocca-2,10(14)-diene-8-beta-ol. The cytochrome P450 monooxygenase PaP450-1 then catalyzes the hydroxylation at the C-16 position to produce fusicocca-2,10(14)-diene-8-beta,16-diol. The dioxygenase fc-dox then catalyzes the 16-oxydation of fusicocca-2,10(14)-diene-8-beta,16-diol to yield an aldehyde (8-beta-hydroxyfusicocca-1,10(14)-dien-16-al). The short-chain dehydrogenase/reductase fc-sdr catalyzes the reduction of the aldehyde to yield fusicocca-1,10(14)-diene-8-beta,16-diol. The next step is the hydroxylation at C-9 performed by the cytochrome P450 monooxygenase PaP450-3 that leads to fusicoccin H aglycon which is glycosylated to fusicoccin H by the O-glycosyltransferase PaGT. Hydroxylation at C-12 by the cytochrome P450 monooxygenase PaP450-4 leads then to the production of fusicoccin Q and is followed by methylation by the O-methyltransferase PaMT to yield fusicoccin P. Fusicoccin P is further converted to fusicoccin J via prenylation by the O-glucose prenyltransferase PaPT. Cytochrome P450 monooxygenase PaP450-5 then performs hydroxylation at C-19 to yield dideacetyl-fusicoccin A which is acetylated to 3'-O-deacetyl-fusicoccin A by the O-acetyltransferase PaAT-2. Finally, a another acetylation by the O-acetyltransferase PaAT-1 yields fusicoccin A. This Phomopsis amygdali (Fusicoccum amygdali) protein is Fusicoccin H C-9 hydroxylase.